Reading from the N-terminus, the 411-residue chain is 2,3-bisphosphoglycerate-independent phosphoglycerate mutase (411 aa).

Belongs to the BPG-independent phosphoglycerate mutase family. A-PGAM subfamily.

It catalyses the reaction (2R)-2-phosphoglycerate = (2R)-3-phosphoglycerate. The protein operates within carbohydrate degradation; glycolysis; pyruvate from D-glyceraldehyde 3-phosphate: step 3/5. In terms of biological role, catalyzes the interconversion of 2-phosphoglycerate and 3-phosphoglycerate. This is 2,3-bisphosphoglycerate-independent phosphoglycerate mutase from Pyrobaculum islandicum (strain DSM 4184 / JCM 9189 / GEO3).